The following is a 594-amino-acid chain: UvrABC system protein C (594 aa).

The region spanning 14–91 (DSPGCYLHKD…IQENMPKYNI (78 aa)) is the GIY-YIG domain. Positions 196-231 (DKIIDDLRSKMLEASNKQEFERAAEYRDLISGIATM) constitute a UVR domain.

The protein belongs to the UvrC family. In terms of assembly, interacts with UvrB in an incision complex.

It localises to the cytoplasm. In terms of biological role, the UvrABC repair system catalyzes the recognition and processing of DNA lesions. UvrC both incises the 5' and 3' sides of the lesion. The N-terminal half is responsible for the 3' incision and the C-terminal half is responsible for the 5' incision. The polypeptide is UvrABC system protein C (Streptococcus equi subsp. zooepidemicus (strain MGCS10565)).